The primary structure comprises 452 residues: Tubulin beta-2 chain (452 aa).

Gln11, Glu74, Ser143, Val147, Thr148, Gly149, Asn209, and Asn231 together coordinate GTP. Position 74 (Glu74) interacts with Mg(2+). The interval 431–452 (QEATADDEAEFEEEGEVEGEYD) is disordered. The segment covering 434–452 (TADDEAEFEEEGEVEGEYD) has biased composition (acidic residues).

This sequence belongs to the tubulin family. In terms of assembly, dimer of alpha and beta chains. A typical microtubule is a hollow water-filled tube with an outer diameter of 25 nm and an inner diameter of 15 nM. Alpha-beta heterodimers associate head-to-tail to form protofilaments running lengthwise along the microtubule wall with the beta-tubulin subunit facing the microtubule plus end conferring a structural polarity. Microtubules usually have 13 protofilaments but different protofilament numbers can be found in some organisms and specialized cells. Requires Mg(2+) as cofactor.

It is found in the cytoplasm. Its subcellular location is the cytoskeleton. Functionally, tubulin is the major constituent of microtubules, a cylinder consisting of laterally associated linear protofilaments composed of alpha- and beta-tubulin heterodimers. Microtubules grow by the addition of GTP-tubulin dimers to the microtubule end, where a stabilizing cap forms. Below the cap, tubulin dimers are in GDP-bound state, owing to GTPase activity of alpha-tubulin. The chain is Tubulin beta-2 chain from Homarus americanus (American lobster).